Consider the following 243-residue polypeptide: MADLLLGVNIDHIATLRNARGTIYPDPVQAAFIAEQAGADGITVHLREDRRHITDRDVRILRQTIQTRMNLEMAVTDEMVDIACDIKPHFCCLVPEKRQEVTTEGGLDVAGQVDKMTLAVGRLADVGILVSLFIDADFRQIDAAVAAGAPYIEIHTGAYADASTVLERQAELMRIAKAATYAAGKGLKVNAGHGLTYHNVQPIAALPEMHELNIGHAIIGQAVMTGLAAAVTDMKVLMREARR.

Residue asparagine 9 participates in 3-amino-2-oxopropyl phosphate binding. Aspartate 11–histidine 12 serves as a coordination point for 1-deoxy-D-xylulose 5-phosphate. Arginine 20 is a binding site for 3-amino-2-oxopropyl phosphate. The active-site Proton acceptor is the histidine 45. Residues arginine 47 and histidine 52 each contribute to the 1-deoxy-D-xylulose 5-phosphate site. Catalysis depends on glutamate 72, which acts as the Proton acceptor. Threonine 102 lines the 1-deoxy-D-xylulose 5-phosphate pocket. Histidine 193 serves as the catalytic Proton donor. Residues glycine 194 and glycine 215–histidine 216 each bind 3-amino-2-oxopropyl phosphate.

The protein belongs to the PNP synthase family. Homooctamer; tetramer of dimers.

It is found in the cytoplasm. It carries out the reaction 3-amino-2-oxopropyl phosphate + 1-deoxy-D-xylulose 5-phosphate = pyridoxine 5'-phosphate + phosphate + 2 H2O + H(+). It functions in the pathway cofactor biosynthesis; pyridoxine 5'-phosphate biosynthesis; pyridoxine 5'-phosphate from D-erythrose 4-phosphate: step 5/5. Functionally, catalyzes the complicated ring closure reaction between the two acyclic compounds 1-deoxy-D-xylulose-5-phosphate (DXP) and 3-amino-2-oxopropyl phosphate (1-amino-acetone-3-phosphate or AAP) to form pyridoxine 5'-phosphate (PNP) and inorganic phosphate. The sequence is that of Pyridoxine 5'-phosphate synthase from Yersinia pestis.